Here is a 1017-residue protein sequence, read N- to C-terminus: Genome polyprotein (1017 aa).

Residues 1–195 form the Peptidase C4 domain; that stretch reads LSVTRKQCLE…IAWGPLNLVE (195 aa). Active-site for nuclear inclusion protein A activity residues include Asp57 and Cys127. In terms of domain architecture, RdRp catalytic spans 461–585; sequence WTYCHADGSQ…AVKDEDVWLY (125 aa). Over residues 746–760 the composition is skewed to basic and acidic residues; sequence DAGKESKKDASDKGN. Positions 746–787 are disordered; sequence DAGKESKKDASDKGNKPQNSQVGQGSKEPTKTGTVSKDVNVG.

This sequence belongs to the potyviridae genome polyprotein family. Post-translationally, genome polyprotein of potyviruses undergoes post-translational proteolytic processing by the main proteinase NIa-pro resulting in the production of at least ten individual proteins. The P1 proteinase and the HC-pro cleave only their respective C-termini autocatalytically. 6K1 is essential for proper proteolytic separation of P3 from CI.

The protein resides in the virion. The catalysed reaction is Hydrolyzes glutaminyl bonds, and activity is further restricted by preferences for the amino acids in P6 - P1' that vary with the species of potyvirus, e.g. Glu-Xaa-Xaa-Tyr-Xaa-Gln-|-(Ser or Gly) for the enzyme from tobacco etch virus. The natural substrate is the viral polyprotein, but other proteins and oligopeptides containing the appropriate consensus sequence are also cleaved.. It catalyses the reaction RNA(n) + a ribonucleoside 5'-triphosphate = RNA(n+1) + diphosphate. Its function is as follows. Has RNA-binding and proteolytic activities. Functionally, an RNA-dependent RNA polymerase that plays an essential role in the virus replication. In terms of biological role, involved in aphid transmission, cell-to-cell and systemis movement, encapsidation of the viral RNA and in the regulation of viral RNA amplification. This Watermelon mosaic virus II (isolate USA) protein is Genome polyprotein.